The primary structure comprises 131 residues: uncharacterized protein (131 aa).

This is an uncharacterized protein from Rickettsia conorii (strain ATCC VR-613 / Malish 7).